The chain runs to 281 residues: NADPH-dependent 7-cyano-7-deazaguanine reductase (281 aa).

A substrate-binding site is contributed by 88–90 (IES). 90–91 (SK) contacts NADPH. The active-site Thioimide intermediate is Cys189. The Proton donor role is filled by Asp196. 228–229 (HE) is a substrate binding site. 257–258 (RG) is a binding site for NADPH.

Belongs to the GTP cyclohydrolase I family. QueF type 2 subfamily. Homodimer.

It localises to the cytoplasm. It catalyses the reaction 7-aminomethyl-7-carbaguanine + 2 NADP(+) = 7-cyano-7-deazaguanine + 2 NADPH + 3 H(+). The protein operates within tRNA modification; tRNA-queuosine biosynthesis. In terms of biological role, catalyzes the NADPH-dependent reduction of 7-cyano-7-deazaguanine (preQ0) to 7-aminomethyl-7-deazaguanine (preQ1). The polypeptide is NADPH-dependent 7-cyano-7-deazaguanine reductase (Sodalis glossinidius (strain morsitans)).